The sequence spans 361 residues: Outer membrane protein P2 (361 aa).

The first 20 residues, 1–20 (MKKTLAALIVGAFAASAANA), serve as a signal peptide directing secretion.

It belongs to the Gram-negative porin family. Homotrimer.

It is found in the cell outer membrane. Forms pores that allow passive diffusion of small molecules across the outer membrane. This chain is Outer membrane protein P2 (ompP2), found in Haemophilus influenzae.